Here is a 249-residue protein sequence, read N- to C-terminus: ATP synthase subunit a (249 aa).

5 consecutive transmembrane segments (helical) span residues 33–53, 92–112, 131–151, 196–216, and 217–237; these read GQVIAVSWIVFAILIIASIAA, LPFIGTLFLFIFVSNWLGALI, INTTVALALLTSLAYFYAGIS, LVVAVLVFLVPLVVPLPLMAL, and GLFTSAIQALVFATLAGAYIH.

The protein belongs to the ATPase A chain family. As to quaternary structure, F-type ATPases have 2 components, CF(1) - the catalytic core - and CF(0) - the membrane proton channel. CF(1) has five subunits: alpha(3), beta(3), gamma(1), delta(1), epsilon(1). CF(0) has four main subunits: a, b, b' and c.

It is found in the cellular thylakoid membrane. Key component of the proton channel; it plays a direct role in the translocation of protons across the membrane. This chain is ATP synthase subunit a, found in Microcystis aeruginosa (strain NIES-843 / IAM M-2473).